A 766-amino-acid chain; its full sequence is Transcription factor GTE4 (766 aa).

3 disordered regions span residues 87 to 108, 234 to 262, and 388 to 412; these read GTNSHGDKNLTEAPSENLPGDD, RDTTDAQQPAGLTSDSAHATAAGSMPMEE, and GDKLPPAESNKKSKSSSKKQGGDVG. Residues 238-250 show a composition bias toward polar residues; the sequence is DAQQPAGLTSDSA. The Bromo domain maps to 416–522; it reads GAGTKVFKNC…QIFEERWAVI (107 aa). 2 disordered regions span residues 544–606 and 687–766; these read TMRS…NKRD and ARAE…SDQT. Residues 574-589 are compositionally biased toward low complexity; that stretch reads PTTTPGRTPTSATPSG. The 82-residue stretch at 597–678 folds into the NET domain; that stretch reads PKANEPNKRD…NYKKGLSKKK (82 aa). The segment covering 736–766 has biased composition (low complexity); that stretch reads SRSSSSSSSSSSSSSSDSDSDSSSSSGSDQT.

Ubiquitously expressed.

It localises to the nucleus. Its function is as follows. Involved in the activation and maintenance of cell division in the meristems and by this controls cell numbers in differentiated organs. Its action in cell cycle regulation may be directed through the RB-E2F pathway. In Arabidopsis thaliana (Mouse-ear cress), this protein is Transcription factor GTE4 (GTE4).